Reading from the N-terminus, the 470-residue chain is ATP synthase subunit beta (470 aa).

Residue 157–164 participates in ATP binding; sequence GGAGVGKT.

The protein belongs to the ATPase alpha/beta chains family. As to quaternary structure, F-type ATPases have 2 components, CF(1) - the catalytic core - and CF(0) - the membrane proton channel. CF(1) has five subunits: alpha(3), beta(3), gamma(1), delta(1), epsilon(1). CF(0) has three main subunits: a(1), b(2) and c(9-12). The alpha and beta chains form an alternating ring which encloses part of the gamma chain. CF(1) is attached to CF(0) by a central stalk formed by the gamma and epsilon chains, while a peripheral stalk is formed by the delta and b chains.

It localises to the cell inner membrane. The enzyme catalyses ATP + H2O + 4 H(+)(in) = ADP + phosphate + 5 H(+)(out). Produces ATP from ADP in the presence of a proton gradient across the membrane. The catalytic sites are hosted primarily by the beta subunits. This is ATP synthase subunit beta from Geobacter metallireducens (strain ATCC 53774 / DSM 7210 / GS-15).